We begin with the raw amino-acid sequence, 572 residues long: Urease subunit alpha (572 aa).

Residues 136-572 (GGIDTHIHFI…VPLGQRYFLF (437 aa)) form the Urease domain. Ni(2+)-binding residues include histidine 141, histidine 143, and lysine 224. N6-carboxylysine is present on lysine 224. Histidine 226 is a substrate binding site. Positions 253 and 279 each coordinate Ni(2+). Histidine 327 acts as the Proton donor in catalysis. Ni(2+) is bound at residue aspartate 367.

The protein belongs to the metallo-dependent hydrolases superfamily. Urease alpha subunit family. Heterotrimer of UreA (gamma), UreB (beta) and UreC (alpha) subunits. Three heterotrimers associate to form the active enzyme. It depends on Ni cation as a cofactor. In terms of processing, carboxylation allows a single lysine to coordinate two nickel ions.

Its subcellular location is the cytoplasm. The enzyme catalyses urea + 2 H2O + H(+) = hydrogencarbonate + 2 NH4(+). The protein operates within nitrogen metabolism; urea degradation; CO(2) and NH(3) from urea (urease route): step 1/1. In Haemophilus influenzae (strain ATCC 51907 / DSM 11121 / KW20 / Rd), this protein is Urease subunit alpha.